The following is a 312-amino-acid chain: Aspartate carbamoyltransferase catalytic subunit (312 aa).

Positions 58 and 59 each coordinate carbamoyl phosphate. Lys-86 contributes to the L-aspartate binding site. The carbamoyl phosphate site is built by Arg-108, His-136, and Gln-139. Arg-169 and Arg-223 together coordinate L-aspartate. Carbamoyl phosphate-binding residues include Gly-264 and Pro-265.

This sequence belongs to the aspartate/ornithine carbamoyltransferase superfamily. ATCase family. As to quaternary structure, heterododecamer (2C3:3R2) of six catalytic PyrB chains organized as two trimers (C3), and six regulatory PyrI chains organized as three dimers (R2).

The enzyme catalyses carbamoyl phosphate + L-aspartate = N-carbamoyl-L-aspartate + phosphate + H(+). It functions in the pathway pyrimidine metabolism; UMP biosynthesis via de novo pathway; (S)-dihydroorotate from bicarbonate: step 2/3. Its function is as follows. Catalyzes the condensation of carbamoyl phosphate and aspartate to form carbamoyl aspartate and inorganic phosphate, the committed step in the de novo pyrimidine nucleotide biosynthesis pathway. The protein is Aspartate carbamoyltransferase catalytic subunit of Desulfitobacterium hafniense (strain DSM 10664 / DCB-2).